Here is a 61-residue protein sequence, read N- to C-terminus: Small ribosomal subunit protein uS14B (61 aa).

Zn(2+)-binding residues include cysteine 24, cysteine 27, cysteine 40, and cysteine 43.

It belongs to the universal ribosomal protein uS14 family. Zinc-binding uS14 subfamily. In terms of assembly, part of the 30S ribosomal subunit. Contacts proteins S3 and S10. Requires Zn(2+) as cofactor.

Binds 16S rRNA, required for the assembly of 30S particles and may also be responsible for determining the conformation of the 16S rRNA at the A site. The sequence is that of Small ribosomal subunit protein uS14B from Rhodococcus jostii (strain RHA1).